We begin with the raw amino-acid sequence, 265 residues long: Phosphatidylglycerol--prolipoprotein diacylglyceryl transferase (265 aa).

7 helical membrane-spanning segments follow: residues 11–31, 56–76, 91–111, 120–140, 173–193, 198–218, and 233–253; these read AVSIGPLQFRWYGLMYLFGFI, MVTWAIFGVVLGGRLGYILFY, IWHGGMSFHGGLLGVLFAVWL, FLSVVDFVAPLIPPGLFFGRI, QLYEAVLEGVVLFAAVWWFSG, VGAVSGLFGVLYAIFRFAVEF, and WLTMGQVLCLPLFGVGMWLLL. Residue Arg139 participates in a 1,2-diacyl-sn-glycero-3-phospho-(1'-sn-glycerol) binding.

Belongs to the Lgt family.

The protein resides in the cell inner membrane. The enzyme catalyses L-cysteinyl-[prolipoprotein] + a 1,2-diacyl-sn-glycero-3-phospho-(1'-sn-glycerol) = an S-1,2-diacyl-sn-glyceryl-L-cysteinyl-[prolipoprotein] + sn-glycerol 1-phosphate + H(+). It participates in protein modification; lipoprotein biosynthesis (diacylglyceryl transfer). In terms of biological role, catalyzes the transfer of the diacylglyceryl group from phosphatidylglycerol to the sulfhydryl group of the N-terminal cysteine of a prolipoprotein, the first step in the formation of mature lipoproteins. This Nitratidesulfovibrio vulgaris (strain DSM 19637 / Miyazaki F) (Desulfovibrio vulgaris) protein is Phosphatidylglycerol--prolipoprotein diacylglyceryl transferase.